Here is a 354-residue protein sequence, read N- to C-terminus: 4-hydroxy-3-methylbut-2-en-1-yl diphosphate synthase (flavodoxin) (354 aa).

[4Fe-4S] cluster-binding residues include Cys-263, Cys-266, Cys-298, and Glu-305.

It belongs to the IspG family. Requires [4Fe-4S] cluster as cofactor.

It carries out the reaction (2E)-4-hydroxy-3-methylbut-2-enyl diphosphate + oxidized [flavodoxin] + H2O + 2 H(+) = 2-C-methyl-D-erythritol 2,4-cyclic diphosphate + reduced [flavodoxin]. It participates in isoprenoid biosynthesis; isopentenyl diphosphate biosynthesis via DXP pathway; isopentenyl diphosphate from 1-deoxy-D-xylulose 5-phosphate: step 5/6. Its function is as follows. Converts 2C-methyl-D-erythritol 2,4-cyclodiphosphate (ME-2,4cPP) into 1-hydroxy-2-methyl-2-(E)-butenyl 4-diphosphate. This Fusobacterium nucleatum subsp. nucleatum (strain ATCC 25586 / DSM 15643 / BCRC 10681 / CIP 101130 / JCM 8532 / KCTC 2640 / LMG 13131 / VPI 4355) protein is 4-hydroxy-3-methylbut-2-en-1-yl diphosphate synthase (flavodoxin).